The chain runs to 1293 residues: Phosphoribosylformylglycinamidine synthase (1293 aa).

ATP-binding positions include 305–316 and A676; that span reads GAATGSGGEIRD. The disordered stretch occupies residues 305–327; that stretch reads GAATGSGGEIRDEGATGRGSKPK. 4 residues coordinate Mg(2+): D677, E716, N720, and D884. ATP is bound at residue S886. Positions 1040–1293 constitute a Glutamine amidotransferase type-1 domain; it reads MAILREQGVN…MFRNARVNLG (254 aa). The active-site Nucleophile is the C1133. Residues H1258 and E1260 contribute to the active site.

This sequence in the N-terminal section; belongs to the FGAMS family. As to quaternary structure, monomer.

It is found in the cytoplasm. It catalyses the reaction N(2)-formyl-N(1)-(5-phospho-beta-D-ribosyl)glycinamide + L-glutamine + ATP + H2O = 2-formamido-N(1)-(5-O-phospho-beta-D-ribosyl)acetamidine + L-glutamate + ADP + phosphate + H(+). The protein operates within purine metabolism; IMP biosynthesis via de novo pathway; 5-amino-1-(5-phospho-D-ribosyl)imidazole from N(2)-formyl-N(1)-(5-phospho-D-ribosyl)glycinamide: step 1/2. Phosphoribosylformylglycinamidine synthase involved in the purines biosynthetic pathway. Catalyzes the ATP-dependent conversion of formylglycinamide ribonucleotide (FGAR) and glutamine to yield formylglycinamidine ribonucleotide (FGAM) and glutamate. The chain is Phosphoribosylformylglycinamidine synthase from Shewanella oneidensis (strain ATCC 700550 / JCM 31522 / CIP 106686 / LMG 19005 / NCIMB 14063 / MR-1).